We begin with the raw amino-acid sequence, 95 residues long: MSVDEKTVRRIAHLARIAVTDDEVGPLQGELNAILAFVEQLGTVDVAGVEPMTSVTPMAMKKREDVVTEGGRAADVVANAPETEDNYFLVPKVVE.

It belongs to the GatC family. As to quaternary structure, heterotrimer of A, B and C subunits.

It catalyses the reaction L-glutamyl-tRNA(Gln) + L-glutamine + ATP + H2O = L-glutaminyl-tRNA(Gln) + L-glutamate + ADP + phosphate + H(+). The catalysed reaction is L-aspartyl-tRNA(Asn) + L-glutamine + ATP + H2O = L-asparaginyl-tRNA(Asn) + L-glutamate + ADP + phosphate + 2 H(+). Allows the formation of correctly charged Asn-tRNA(Asn) or Gln-tRNA(Gln) through the transamidation of misacylated Asp-tRNA(Asn) or Glu-tRNA(Gln) in organisms which lack either or both of asparaginyl-tRNA or glutaminyl-tRNA synthetases. The reaction takes place in the presence of glutamine and ATP through an activated phospho-Asp-tRNA(Asn) or phospho-Glu-tRNA(Gln). The polypeptide is Aspartyl/glutamyl-tRNA(Asn/Gln) amidotransferase subunit C (Methylobacterium radiotolerans (strain ATCC 27329 / DSM 1819 / JCM 2831 / NBRC 15690 / NCIMB 10815 / 0-1)).